We begin with the raw amino-acid sequence, 230 residues long: MRLVIARCSVDYVGRLEAHLPSADRLLMVKADGSVSIHADDRAYKPLNWMTPPCSLVETPITDEDGEATGESLWVVENKKGEQLRITVEEIHSEQNFDLGQDPGLVKDGVEDHLQELLAEHITTLGDGYTLIRREYPTAIGPVDILCRNSDGETVAVEIKRRGGIDGVEQLTRYLELLNRDELLKPVHGVFAAQEIKPQAKTLAEDRGIKCVTLDYQALRGIESNELTLF.

It belongs to the NucS endonuclease family.

The protein localises to the cytoplasm. In terms of biological role, cleaves both 3' and 5' ssDNA extremities of branched DNA structures. This Corynebacterium glutamicum (strain ATCC 13032 / DSM 20300 / JCM 1318 / BCRC 11384 / CCUG 27702 / LMG 3730 / NBRC 12168 / NCIMB 10025 / NRRL B-2784 / 534) protein is Endonuclease NucS.